Here is a 519-residue protein sequence, read N- to C-terminus: Protein nucleotidyltransferase YdiU (519 aa).

The ATP site is built by Gly101, Gly103, Arg104, Lys123, Asp135, Gly136, Arg193, and Arg200. Residue Asp271 is the Proton acceptor of the active site. Mg(2+) contacts are provided by Asn272 and Asp281. ATP is bound at residue Asp281.

This sequence belongs to the SELO family. The cofactor is Mg(2+). Requires Mn(2+) as cofactor.

The catalysed reaction is L-seryl-[protein] + ATP = 3-O-(5'-adenylyl)-L-seryl-[protein] + diphosphate. It carries out the reaction L-threonyl-[protein] + ATP = 3-O-(5'-adenylyl)-L-threonyl-[protein] + diphosphate. The enzyme catalyses L-tyrosyl-[protein] + ATP = O-(5'-adenylyl)-L-tyrosyl-[protein] + diphosphate. It catalyses the reaction L-histidyl-[protein] + UTP = N(tele)-(5'-uridylyl)-L-histidyl-[protein] + diphosphate. The catalysed reaction is L-seryl-[protein] + UTP = O-(5'-uridylyl)-L-seryl-[protein] + diphosphate. It carries out the reaction L-tyrosyl-[protein] + UTP = O-(5'-uridylyl)-L-tyrosyl-[protein] + diphosphate. In terms of biological role, nucleotidyltransferase involved in the post-translational modification of proteins. It can catalyze the addition of adenosine monophosphate (AMP) or uridine monophosphate (UMP) to a protein, resulting in modifications known as AMPylation and UMPylation. The protein is Protein nucleotidyltransferase YdiU of Tolumonas auensis (strain DSM 9187 / NBRC 110442 / TA 4).